A 484-amino-acid polypeptide reads, in one-letter code: UDP-N-acetylmuramoyl-L-alanyl-D-glutamate--2,6-diaminopimelate ligase (484 aa).

Ser30 provides a ligand contact to UDP-N-acetyl-alpha-D-muramoyl-L-alanyl-D-glutamate. An ATP-binding site is contributed by 109–115 (GTNGKTS). Residues 151-152 (TT), Ser178, and Arg186 contribute to the UDP-N-acetyl-alpha-D-muramoyl-L-alanyl-D-glutamate site. Lys218 bears the N6-carboxylysine mark. Meso-2,6-diaminopimelate contacts are provided by residues Arg379, 403–406 (DNPR), Gly455, and Glu459. The Meso-diaminopimelate recognition motif motif lies at 403–406 (DNPR).

Belongs to the MurCDEF family. MurE subfamily. It depends on Mg(2+) as a cofactor. Post-translationally, carboxylation is probably crucial for Mg(2+) binding and, consequently, for the gamma-phosphate positioning of ATP.

The protein localises to the cytoplasm. It catalyses the reaction UDP-N-acetyl-alpha-D-muramoyl-L-alanyl-D-glutamate + meso-2,6-diaminopimelate + ATP = UDP-N-acetyl-alpha-D-muramoyl-L-alanyl-gamma-D-glutamyl-meso-2,6-diaminopimelate + ADP + phosphate + H(+). The protein operates within cell wall biogenesis; peptidoglycan biosynthesis. Its function is as follows. Catalyzes the addition of meso-diaminopimelic acid to the nucleotide precursor UDP-N-acetylmuramoyl-L-alanyl-D-glutamate (UMAG) in the biosynthesis of bacterial cell-wall peptidoglycan. The polypeptide is UDP-N-acetylmuramoyl-L-alanyl-D-glutamate--2,6-diaminopimelate ligase (Clostridioides difficile (strain 630) (Peptoclostridium difficile)).